Consider the following 407-residue polypeptide: Protein phosphatase methylesterase 1 (407 aa).

Residues 1–53 (MSDLQKSFAKSKLAKLPPEPPPIPESVADEDDDSGSSTETVTPSPVKQLFARP) form a disordered region. Active-site residues include S185, D211, and H342. The segment covering 388–401 (GAGVPLGKAEGGTT) has biased composition (gly residues). The disordered stretch occupies residues 388-407 (GAGVPLGKAEGGTTGSFKRS).

The protein belongs to the AB hydrolase superfamily.

The catalysed reaction is [phosphatase 2A protein]-C-terminal L-leucine methyl ester + H2O = [phosphatase 2A protein]-C-terminal L-leucine + methanol + H(+). Functionally, demethylates proteins that have been reversibly carboxymethylated. Demethylates the phosphatase PP2A catalytic subunit. The chain is Protein phosphatase methylesterase 1 (ppe1) from Emericella nidulans (strain FGSC A4 / ATCC 38163 / CBS 112.46 / NRRL 194 / M139) (Aspergillus nidulans).